Here is a 45-residue protein sequence, read N- to C-terminus: Thymosin beta-15A (45 aa).

Composition is skewed to basic and acidic residues over residues 1–27 (MSDKPDLSEVEKFDRSKLKKTNTEEKN) and 35–45 (IQQEKECVQTS). The interval 1-45 (MSDKPDLSEVEKFDRSKLKKTNTEEKNTLPSKETIQQEKECVQTS) is disordered.

It belongs to the thymosin beta family. Neuroblastoma-specific.

It localises to the cytoplasm. It is found in the cytoskeleton. In terms of biological role, plays an important role in the organization of the cytoskeleton. Binds to and sequesters actin monomers (G actin) and therefore inhibits actin polymerization. This Homo sapiens (Human) protein is Thymosin beta-15A (TMSB15A).